The chain runs to 480 residues: ATP synthase subunit beta (480 aa).

158–165 lines the ATP pocket; it reads GGAGVGKT.

The protein belongs to the ATPase alpha/beta chains family. F-type ATPases have 2 components, CF(1) - the catalytic core - and CF(0) - the membrane proton channel. CF(1) has five subunits: alpha(3), beta(3), gamma(1), delta(1), epsilon(1). CF(0) has three main subunits: a(1), b(2) and c(9-12). The alpha and beta chains form an alternating ring which encloses part of the gamma chain. CF(1) is attached to CF(0) by a central stalk formed by the gamma and epsilon chains, while a peripheral stalk is formed by the delta and b chains.

Its subcellular location is the cell inner membrane. It catalyses the reaction ATP + H2O + 4 H(+)(in) = ADP + phosphate + 5 H(+)(out). Functionally, produces ATP from ADP in the presence of a proton gradient across the membrane. The catalytic sites are hosted primarily by the beta subunits. This Koribacter versatilis (strain Ellin345) protein is ATP synthase subunit beta.